We begin with the raw amino-acid sequence, 188 residues long: uncharacterized protein (188 aa).

This sequence belongs to the isochorismatase family.

This is an uncharacterized protein from Escherichia coli O157:H7.